A 768-amino-acid chain; its full sequence is Protein ITPRID2 (768 aa).

Disordered stretches follow at residues 1-24 (MTTE…AEDS), 39-78 (LQAM…ESEE), and 98-124 (RKSG…CSPG). Composition is skewed to polar residues over residues 39–57 (LQAM…TVTS) and 102–122 (SQDF…STCS). 8 positions are modified to phosphoserine: Ser-153, Ser-177, Ser-246, Ser-248, Ser-255, Ser-268, Ser-276, and Ser-312. Residues 315–338 (SVKKEEAPQSEAPRVEECHHGRTP) are disordered. The span at 316–334 (VKKEEAPQSEAPRVEECHH) shows a compositional bias: basic and acidic residues. Lys-317 is covalently cross-linked (Glycyl lysine isopeptide (Lys-Gly) (interchain with G-Cter in SUMO2)). Ser-378 and Ser-411 each carry phosphoserine. Residues 468-546 (QELQVMRRSL…GLEEQLRAVR (79 aa)) are a coiled coil. Phosphoserine occurs at positions 549, 564, 569, 572, 627, and 643. Disordered regions lie at residues 605 to 647 (IPPG…VGKP) and 663 to 718 (ALTP…AAEE). Positions 610–627 (SSESVFSQATSESSSVCS) are enriched in polar residues. Thr-665 is subject to Phosphothreonine. Residues 667-677 (TAPSRTGSVQT) show a composition bias toward polar residues. Ser-670 carries the post-translational modification Phosphoserine. At Thr-677 the chain carries Phosphothreonine. The segment covering 682-694 (ESSEEVDAAEEAP) has biased composition (acidic residues).

The protein localises to the cytoplasm. This Pongo abelii (Sumatran orangutan) protein is Protein ITPRID2.